A 220-amino-acid chain; its full sequence is Nicotinamidase (220 aa).

Asp-11 is a catalytic residue. Zn(2+)-binding residues include Asp-53, His-55, and His-94. Lys-119 is a catalytic residue. Cys-163 functions as the Nucleophile in the catalytic mechanism.

It belongs to the isochorismatase family.

Its subcellular location is the cytoplasm. The protein resides in the nucleus. The protein localises to the peroxisome. It catalyses the reaction nicotinamide + H2O = nicotinate + NH4(+). The protein operates within cofactor biosynthesis; nicotinate biosynthesis; nicotinate from nicotinamide: step 1/1. In terms of biological role, catalyzes the deamidation of nicotinamide, an early step in the NAD(+) salvage pathway. The polypeptide is Nicotinamidase (pnc1) (Schizosaccharomyces pombe (strain 972 / ATCC 24843) (Fission yeast)).